Consider the following 103-residue polypeptide: Small ribosomal subunit protein uS10 (103 aa).

Belongs to the universal ribosomal protein uS10 family. In terms of assembly, part of the 30S ribosomal subunit.

In terms of biological role, involved in the binding of tRNA to the ribosomes. The polypeptide is Small ribosomal subunit protein uS10 (Acetivibrio thermocellus (strain ATCC 27405 / DSM 1237 / JCM 9322 / NBRC 103400 / NCIMB 10682 / NRRL B-4536 / VPI 7372) (Clostridium thermocellum)).